A 263-amino-acid polypeptide reads, in one-letter code: Proteasome subunit alpha type-1 (263 aa).

Met-1 carries the N-acetylmethionine modification. Ser-110 bears the Phosphoserine; alternate mark. O-linked (GlcNAc) serine; alternate glycosylation occurs at Ser-110. Lys-115 is covalently cross-linked (Glycyl lysine isopeptide (Lys-Gly) (interchain with G-Cter in ubiquitin)). Ser-177 is modified (phosphoserine). Residue Lys-208 forms a Glycyl lysine isopeptide (Lys-Gly) (interchain with G-Cter in ubiquitin) linkage. Residues 232–263 form a disordered region; that stretch reads FLDGLEERPQRKAQPSQAAEEPAEKADEPMEH. The segment covering 253 to 263 has biased composition (basic and acidic residues); sequence PAEKADEPMEH.

This sequence belongs to the peptidase T1A family. In terms of assembly, the 26S proteasome consists of a 20S proteasome core and two 19S regulatory subunits. The 20S proteasome core is a barrel-shaped complex made of 28 subunits that are arranged in four stacked rings. The two outer rings are each formed by seven alpha subunits, and the two inner rings are formed by seven beta subunits. The proteolytic activity is exerted by three beta-subunits PSMB5, PSMB6 and PSMB7. Interacts with NOTCH3. Interacts with ZFAND1. Post-translationally, C-terminal extension is partially cleaved off by limited proteolysis leading to a conversion of the proteasome from its latent into its active form. In terms of tissue distribution, detected in liver (at protein level).

The protein localises to the cytoplasm. Its subcellular location is the nucleus. Component of the 20S core proteasome complex involved in the proteolytic degradation of most intracellular proteins. This complex plays numerous essential roles within the cell by associating with different regulatory particles. Associated with two 19S regulatory particles, forms the 26S proteasome and thus participates in the ATP-dependent degradation of ubiquitinated proteins. The 26S proteasome plays a key role in the maintenance of protein homeostasis by removing misfolded or damaged proteins that could impair cellular functions, and by removing proteins whose functions are no longer required. Associated with the PA200 or PA28, the 20S proteasome mediates ubiquitin-independent protein degradation. This type of proteolysis is required in several pathways including spermatogenesis (20S-PA200 complex) or generation of a subset of MHC class I-presented antigenic peptides (20S-PA28 complex). The protein is Proteasome subunit alpha type-1 (Psma1) of Mus musculus (Mouse).